We begin with the raw amino-acid sequence, 355 residues long: MFKLTSSPHIHSGKLTARIMLWVIFGMLPALAVQVYYFGFGVLIQICLAVALALILEFAVTKLRKKPSLFYISDFSVILTALILAMAIPPYAPYWVILIGTFCAVILGKHVYGGLGQNLFNPAMVGYVVLLISFPVQMTGWMPPISLLHEPPTFGDSLGLIFSGVTGDGFSLSQLVSSIDGLSSATPLDSAKTWLKSGGSATDLLNQPIFLPGLEAGLGWLQVNLAFFIGGLFLIWKKAIHWQTPVAILLSLGIFCGLFDLFGNAQAVGFFAQLFSGAMMFGAFFIATDPVTAPVTPKGKWVFGILIGLLICLIRQFGNYPDGVAFAVLLANICVPLIDQYTRPRVAGYGLNGRN.

5 helical membrane passes run 13-33 (GKLT…ALAV), 35-55 (VYYF…LALI), 77-97 (VILT…YWVI), 98-118 (LIGT…LGQN), and 128-148 (VVLL…ISLL). Thr-186 carries the FMN phosphoryl threonine modification. Transmembrane regions (helical) follow at residues 216 to 236 (AGLG…FLIW), 245 to 265 (PVAI…FGNA), 267 to 287 (AVGF…FFIA), 294 to 314 (PVTP…ICLI), and 318 to 338 (GNYP…VPLI).

It belongs to the NqrB/RnfD family. The complex is composed of six subunits: RnfA, RnfB, RnfC, RnfD, RnfE and RnfG. The cofactor is FMN.

The protein resides in the cell inner membrane. Part of a membrane-bound complex that couples electron transfer with translocation of ions across the membrane. This is Ion-translocating oxidoreductase complex subunit D from Actinobacillus succinogenes (strain ATCC 55618 / DSM 22257 / CCUG 43843 / 130Z).